Consider the following 311-residue polypeptide: Putative dihydroorotate dehydrogenase A (fumarate) (311 aa).

Residues lysine 45, 69-73 (NSMGL), and asparagine 128 each bind substrate. 45 to 46 (KT) contributes to the FMN binding site. Asparagine 128 serves as a coordination point for FMN. Cysteine 131 (nucleophile) is an active-site residue. FMN is bound by residues lysine 165 and valine 193. Residue 194–195 (NS) participates in substrate binding. Residues glycine 220, 248-249 (GG), and 270-271 (GT) each bind FMN.

The protein belongs to the dihydroorotate dehydrogenase family. Type 1 subfamily. In terms of assembly, homodimer. FMN is required as a cofactor.

Its subcellular location is the cytoplasm. The catalysed reaction is (S)-dihydroorotate + fumarate = orotate + succinate. Its pathway is pyrimidine metabolism; UMP biosynthesis via de novo pathway. Its function is as follows. Catalyzes the conversion of dihydroorotate to orotate with fumarate as the electron acceptor. In Streptococcus pyogenes serotype M3 (strain SSI-1), this protein is Putative dihydroorotate dehydrogenase A (fumarate) (pyrD).